A 280-amino-acid chain; its full sequence is F-actin-capping protein subunit alpha (280 aa).

Belongs to the F-actin-capping protein alpha subunit family. As to quaternary structure, heterodimer of an alpha and a beta subunit.

The protein resides in the cytoplasm. It is found in the cytoskeleton. Functionally, F-actin-capping proteins bind in a Ca(2+)-independent manner to the fast growing ends of actin filaments (barbed end) thereby blocking the exchange of subunits at these ends. Unlike other capping proteins (such as gelsolin and severin), these proteins do not sever actin filaments. The protein is F-actin-capping protein subunit alpha (CAP01) of Candida albicans (strain SC5314 / ATCC MYA-2876) (Yeast).